A 588-amino-acid chain; its full sequence is Arylsulfatase L (588 aa).

The signal sequence occupies residues 1–31 (MLHLHHSWLCFRSWLAGMLSVLLGLVPSASS). Asn32 is a glycosylation site (N-linked (GlcNAc...) asparagine). Ca(2+)-binding residues include Asp46 and Asp47. N-linked (GlcNAc...) asparagine glycosylation occurs at Asn58. Cys86 lines the Ca(2+) pocket. Cys86 acts as the Nucleophile in catalysis. A 3-oxoalanine (Cys) modification is found at Cys86. Residue Asn125 is glycosylated (N-linked (GlcNAc...) asparagine). Residue Lys145 participates in substrate binding. His147 is an active-site residue. Asn258 carries an N-linked (GlcNAc...) asparagine glycan. His301 lines the substrate pocket. An N-linked (GlcNAc...) asparagine glycan is attached at Asn344. Positions 353 and 354 each coordinate Ca(2+). Substrate is bound at residue Lys378.

It belongs to the sulfatase family. It depends on Ca(2+) as a cofactor. In terms of processing, the conversion to 3-oxoalanine (also known as C-formylglycine, FGly), of a serine or cysteine residue in prokaryotes and of a cysteine residue in eukaryotes, is critical for catalytic activity.

It localises to the golgi apparatus. The protein resides in the golgi stack. The catalysed reaction is an aryl sulfate + H2O = a phenol + sulfate + H(+). Exhibits arylsulfatase activity towards the artificial substrate 4-methylumbelliferyl sulfate. May be essential for the correct composition of cartilage and bone matrix during development. Has no activity toward steroid sulfates. The protein is Arylsulfatase L (ARSL) of Macaca fascicularis (Crab-eating macaque).